We begin with the raw amino-acid sequence, 779 residues long: Mesenchyme-specific cell surface glycoprotein (779 aa).

The signal sequence occupies residues 1-15 (MQFGVPLLVLCLALG). N-linked (GlcNAc...) asparagine glycans are attached at residues Asn-203 and Asn-234. Positions 249–363 (AGFPRGTTWS…QYPMIPTTPL (115 aa)) are disordered. The segment covering 262–351 (GAGGQGGQGQ…GGQGGQGGGN (90 aa)) has biased composition (gly residues). N-linked (GlcNAc...) asparagine glycosylation is found at Asn-369, Asn-451, and Asn-609.

As to expression, restricted to the primary mesenchyme cell lineage.

The protein resides in the cell membrane. In terms of biological role, not known. Could be involved in mesenchyme cell migration, adhesion, fusion, or spicule formation. This chain is Mesenchyme-specific cell surface glycoprotein, found in Strongylocentrotus purpuratus (Purple sea urchin).